The primary structure comprises 475 residues: Putative poly(A) polymerase catalytic subunit (475 aa).

The protein belongs to the poxviridae poly(A) polymerase catalytic subunit family. Highly divergent.

It localises to the virion. It catalyses the reaction RNA(n) + ATP = RNA(n)-3'-adenine ribonucleotide + diphosphate. Its function is as follows. Polymerase that creates the 3'-poly(A) tail of mRNAs. This chain is Putative poly(A) polymerase catalytic subunit, found in Ornithodoros (relapsing fever ticks).